The primary structure comprises 173 residues: 2-C-methyl-D-erythritol 2,4-cyclodiphosphate synthase (173 aa).

A divalent metal cation-binding residues include Asp-17 and His-19. Residues Asp-17–His-19 and His-49–Ser-50 contribute to the 4-CDP-2-C-methyl-D-erythritol 2-phosphate site. Residue His-57 coordinates a divalent metal cation. 4-CDP-2-C-methyl-D-erythritol 2-phosphate is bound by residues Phe-76–Asp-80, Thr-147–Glu-150, and Arg-157.

It belongs to the IspF family. In terms of assembly, homotrimer. It depends on a divalent metal cation as a cofactor.

The catalysed reaction is 4-CDP-2-C-methyl-D-erythritol 2-phosphate = 2-C-methyl-D-erythritol 2,4-cyclic diphosphate + CMP. Its pathway is isoprenoid biosynthesis; isopentenyl diphosphate biosynthesis via DXP pathway; isopentenyl diphosphate from 1-deoxy-D-xylulose 5-phosphate: step 4/6. Functionally, involved in the biosynthesis of isopentenyl diphosphate (IPP) and dimethylallyl diphosphate (DMAPP), two major building blocks of isoprenoid compounds. Catalyzes the conversion of 4-diphosphocytidyl-2-C-methyl-D-erythritol 2-phosphate (CDP-ME2P) to 2-C-methyl-D-erythritol 2,4-cyclodiphosphate (ME-CPP) with a corresponding release of cytidine 5-monophosphate (CMP). In Ehrlichia ruminantium (strain Welgevonden), this protein is 2-C-methyl-D-erythritol 2,4-cyclodiphosphate synthase.